The sequence spans 141 residues: Hemoglobin subunit alpha-A (141 aa).

Residues 1–141 (VLSAADKTNV…VGTVLTAKYR (141 aa)) form the Globin domain. Histidine 58 serves as a coordination point for O2. Histidine 87 provides a ligand contact to heme b.

It belongs to the globin family. Heterotetramer of two alpha chains and two beta chains. In terms of tissue distribution, red blood cells.

Functionally, involved in oxygen transport from the lung to the various peripheral tissues. In Branta canadensis (Canada goose), this protein is Hemoglobin subunit alpha-A (HBAA).